Reading from the N-terminus, the 450-residue chain is Keratin, type I cytoskeletal 25 (450 aa).

The segment covering 1–23 has biased composition (low complexity); that stretch reads MSLRLSSASRRSCPRPTTGSLRL. The tract at residues 1-26 is disordered; it reads MSLRLSSASRRSCPRPTTGSLRLSGG. The head stretch occupies residues 1 to 78; sequence MSLRLSSASR…VNERGLLSGN (78 aa). Residues 79–114 are coil 1A; the sequence is EKVTMQNLNDRLASYLDSVHALEEANADLEQKIKGW. The IF rod domain maps to 79–394; that stretch reads EKVTMQNLND…LLIGGDDGAC (316 aa). Positions 115 to 136 are linker 1; that stretch reads YEKFGPGSCRGLDHDYSRYFPI. The coil 1B stretch occupies residues 137-228; that stretch reads IDDLKNQIIA…KNHKEEMQVL (92 aa). Positions 229–251 are linker 12; that stretch reads QCAAGGNVNVEMNAAPGVDLTVL. Residues 252-390 are coil 2; sequence LNNMRAEYEA…ETYCLLIGGD (139 aa). Residues 391-450 form a tail region; that stretch reads DGACKSGGYKSKDYGSGNVGSQVKDSAKAIVVKKVLEEVDQRSKILTTRLRSLEEKSQSN. S442 is modified (phosphoserine).

The protein belongs to the intermediate filament family. In terms of assembly, heterodimer of a type I and a type II keratin. Heterodimer with type II keratin KRT5 leading to the formation of keratin intermediate filament (KIF) network. Interacts with KRT6A to form filaments.

The protein localises to the cytoplasm. Functionally, essential for the proper assembly of type I and type II keratin protein complexes and formation of keratin intermediate filaments in the inner root sheath (irs). Plays a role in the cytoskeleton organization. The protein is Keratin, type I cytoskeletal 25 (KRT25) of Pan troglodytes (Chimpanzee).